The chain runs to 328 residues: Beta-ketoacyl-[acyl-carrier-protein] synthase III (328 aa).

Residues Cys-114 and His-253 contribute to the active site. Positions 254 to 258 (QANIR) are ACP-binding. Residue Asn-283 is part of the active site.

This sequence belongs to the thiolase-like superfamily. FabH family. In terms of assembly, homodimer.

Its subcellular location is the cytoplasm. It carries out the reaction malonyl-[ACP] + acetyl-CoA + H(+) = 3-oxobutanoyl-[ACP] + CO2 + CoA. Its pathway is lipid metabolism; fatty acid biosynthesis. Its function is as follows. Catalyzes the condensation reaction of fatty acid synthesis by the addition to an acyl acceptor of two carbons from malonyl-ACP. Catalyzes the first condensation reaction which initiates fatty acid synthesis and may therefore play a role in governing the total rate of fatty acid production. Possesses both acetoacetyl-ACP synthase and acetyl transacylase activities. Its substrate specificity determines the biosynthesis of branched-chain and/or straight-chain of fatty acids. In Clostridioides difficile (strain 630) (Peptoclostridium difficile), this protein is Beta-ketoacyl-[acyl-carrier-protein] synthase III.